A 340-amino-acid polypeptide reads, in one-letter code: Anthranilate phosphoribosyltransferase (340 aa).

Residues Gly-81, 84–85, Thr-89, 91–94, 109–117, and Ser-121 each bind 5-phospho-alpha-D-ribose 1-diphosphate; these read GD, NIST, and KHGNRGATS. Residue Gly-81 participates in anthranilate binding. Residue Ser-93 participates in Mg(2+) binding. Asn-112 contacts anthranilate. Arg-167 contributes to the anthranilate binding site. Mg(2+)-binding residues include Asp-225 and Glu-226.

This sequence belongs to the anthranilate phosphoribosyltransferase family. In terms of assembly, homodimer. Requires Mg(2+) as cofactor.

The enzyme catalyses N-(5-phospho-beta-D-ribosyl)anthranilate + diphosphate = 5-phospho-alpha-D-ribose 1-diphosphate + anthranilate. The protein operates within amino-acid biosynthesis; L-tryptophan biosynthesis; L-tryptophan from chorismate: step 2/5. In terms of biological role, catalyzes the transfer of the phosphoribosyl group of 5-phosphorylribose-1-pyrophosphate (PRPP) to anthranilate to yield N-(5'-phosphoribosyl)-anthranilate (PRA). This chain is Anthranilate phosphoribosyltransferase, found in Methanocorpusculum labreanum (strain ATCC 43576 / DSM 4855 / Z).